Here is a 79-residue protein sequence, read N- to C-terminus: Small ribosomal subunit protein bS18 (79 aa).

The protein belongs to the bacterial ribosomal protein bS18 family. Part of the 30S ribosomal subunit. Forms a tight heterodimer with protein bS6.

Binds as a heterodimer with protein bS6 to the central domain of the 16S rRNA, where it helps stabilize the platform of the 30S subunit. This is Small ribosomal subunit protein bS18 from Bradyrhizobium sp. (strain BTAi1 / ATCC BAA-1182).